The following is a 184-amino-acid chain: Shikimate kinase (184 aa).

17-22 (GAGKTT) contacts ATP. Thr-21 contacts Mg(2+). Positions 39, 63, and 85 each coordinate substrate. Arg-123 contributes to the ATP binding site. A substrate-binding site is contributed by Arg-142.

The protein belongs to the shikimate kinase family. In terms of assembly, monomer. The cofactor is Mg(2+).

Its subcellular location is the cytoplasm. The enzyme catalyses shikimate + ATP = 3-phosphoshikimate + ADP + H(+). It functions in the pathway metabolic intermediate biosynthesis; chorismate biosynthesis; chorismate from D-erythrose 4-phosphate and phosphoenolpyruvate: step 5/7. Functionally, catalyzes the specific phosphorylation of the 3-hydroxyl group of shikimic acid using ATP as a cosubstrate. The protein is Shikimate kinase of Burkholderia lata (strain ATCC 17760 / DSM 23089 / LMG 22485 / NCIMB 9086 / R18194 / 383).